Here is a 217-residue protein sequence, read N- to C-terminus: TLD domain-containing protein 2 (217 aa).

The interval 1-48 (MKSLRWRYTRLPSQVEDALSGEEDKEEEEEKEEETTPAPTPVPEHPMV) is disordered. The segment covering 19–35 (LSGEEDKEEEEEKEEET) has biased composition (acidic residues). Residues 56-217 (QVLGASEMSQ…ISELEAWVLS (162 aa)) form the TLDc domain.

This sequence belongs to the OXR1 family.

This chain is TLD domain-containing protein 2 (TLDC2), found in Bos taurus (Bovine).